Consider the following 354-residue polypeptide: Fructose-bisphosphate aldolase (354 aa).

S61 provides a ligand contact to D-glyceraldehyde 3-phosphate. D104 (proton donor) is an active-site residue. H105, D139, E169, and H221 together coordinate Zn(2+). A dihydroxyacetone phosphate-binding site is contributed by G222. H260 is a Zn(2+) binding site. Residues 261-263 (GGS) and 282-285 (NIDT) each bind dihydroxyacetone phosphate.

Belongs to the class II fructose-bisphosphate aldolase family. In terms of assembly, homodimer. Zn(2+) is required as a cofactor.

It catalyses the reaction beta-D-fructose 1,6-bisphosphate = D-glyceraldehyde 3-phosphate + dihydroxyacetone phosphate. It participates in carbohydrate degradation; glycolysis; D-glyceraldehyde 3-phosphate and glycerone phosphate from D-glucose: step 4/4. Its function is as follows. Catalyzes the aldol condensation of dihydroxyacetone phosphate (DHAP or glycerone-phosphate) with glyceraldehyde 3-phosphate (G3P) to form fructose 1,6-bisphosphate (FBP) in gluconeogenesis and the reverse reaction in glycolysis. The polypeptide is Fructose-bisphosphate aldolase (fba) (Campylobacter jejuni subsp. jejuni serotype O:23/36 (strain 81-176)).